The primary structure comprises 184 residues: dITP/XTP pyrophosphatase (184 aa).

T8–K13 contributes to the substrate binding site. 2 residues coordinate Mg(2+): E37 and D66. D66 (proton acceptor) is an active-site residue. Residues S67, F142–D145, K163, and H168–R169 contribute to the substrate site.

It belongs to the HAM1 NTPase family. In terms of assembly, homodimer. Mg(2+) is required as a cofactor.

The enzyme catalyses XTP + H2O = XMP + diphosphate + H(+). The catalysed reaction is dITP + H2O = dIMP + diphosphate + H(+). It carries out the reaction ITP + H2O = IMP + diphosphate + H(+). Functionally, pyrophosphatase that catalyzes the hydrolysis of nucleoside triphosphates to their monophosphate derivatives, with a high preference for the non-canonical purine nucleotides XTP (xanthosine triphosphate), dITP (deoxyinosine triphosphate) and ITP. Seems to function as a house-cleaning enzyme that removes non-canonical purine nucleotides from the nucleotide pool, thus preventing their incorporation into DNA/RNA and avoiding chromosomal lesions. The protein is dITP/XTP pyrophosphatase of Methanosarcina mazei (strain ATCC BAA-159 / DSM 3647 / Goe1 / Go1 / JCM 11833 / OCM 88) (Methanosarcina frisia).